The primary structure comprises 892 residues: Smad protein daf-3 (892 aa).

Disordered regions lie at residues 1–43 and 135–161; these read MGDH…GLED and PYLD…FDTK. Polar residues predominate over residues 15-26; the sequence is IPPQFNYSQPGT. Positions 198–347 constitute an MH1 domain; it reads KIVEYLMYYR…YEIVIGTMIV (150 aa). A disordered region spans residues 505–552; it reads YPDFHHPFNQQPHQPPQLSQNHTSQQGSHQPGHQGQVPNDPPISRPVL. Positions 528–540 are enriched in low complexity; the sequence is SQQGSHQPGHQGQ. The MH2 domain maps to 657-880; that stretch reads WGTIVYYEKN…TNCFEPLGME (224 aa).

Belongs to the dwarfin/SMAD family. Interacts with R-SMADs daf-8 and daf-14. Interacts with daf-14 in a daf-8 dependent manner. May interact with daf-5.

The protein resides in the cytoplasm. The protein localises to the nucleus. It localises to the chromosome. Transcriptional regulator and common SMAD (co-SMAD), required to regulate entry into a developmentally arrested larval state known as dauer, in response to harsh environmental conditions. Probable component of transcriptional regulatory complex with SMAD protein daf-5. Acts antagonistically to SMAD signaling downstream of TGF-beta-like daf-7 signaling. Binds to the 5'-GTCTG-3' motif found in regulatory regions and may modulate the expression of genes involved in TGF-beta-like daf-7 and Notch lag-2 signaling. May regulate gene expression outside the dauer pathway. In Caenorhabditis elegans, this protein is Smad protein daf-3.